Consider the following 147-residue polypeptide: Deoxyuridine 5'-triphosphate nucleotidohydrolase (147 aa).

Residues 63-65, Asn-76, and 80-82 contribute to the substrate site; these read RSG and TID.

This sequence belongs to the dUTPase family. Requires Mg(2+) as cofactor.

The enzyme catalyses dUTP + H2O = dUMP + diphosphate + H(+). Its pathway is pyrimidine metabolism; dUMP biosynthesis; dUMP from dCTP (dUTP route): step 2/2. This enzyme is involved in nucleotide metabolism: it produces dUMP, the immediate precursor of thymidine nucleotides and it decreases the intracellular concentration of dUTP so that uracil cannot be incorporated into DNA. The sequence is that of Deoxyuridine 5'-triphosphate nucleotidohydrolase from Chlamydia abortus (strain DSM 27085 / S26/3) (Chlamydophila abortus).